A 398-amino-acid polypeptide reads, in one-letter code: Cholinephosphotransferase 1 (398 aa).

An N-acetylalanine modification is found at alanine 2. At 2–62 (AAGAGARPAP…LLQWIPLWMA (61 aa)) the chain is on the cytoplasmic side. The helical transmembrane segment at 63–83 (PNTITLIGLAINLVTTLVLIF) threads the bilayer. Asparagine 64 is a binding site for CDP-choline. Over 84–93 (YCPTVTEEAP) the chain is Lumenal. A helical transmembrane segment spans residues 94 to 118 (YWTYLLCALGLFIYQSLDAIDGKQA). Positions 111 and 114 each coordinate Mg(2+). A CDP-choline-binding site is contributed by arginine 119. Topologically, residues 119–125 (RRTNSCS) are cytoplasmic. A helical transmembrane segment spans residues 126-150 (PLGELFDHGCDSLSTVFMAIGASIA). Aspartate 132 serves as a coordination point for Mg(2+). Histidine 133 functions as the Proton acceptor in the catalytic mechanism. Aspartate 136 lines the Mg(2+) pocket. The Lumenal portion of the chain corresponds to 151 to 160 (VRLGTHPDWL). Residues 161–179 (FFCSFVGMFMFYCAHWQTY) traverse the membrane as a helical segment. The Cytoplasmic segment spans residues 180–190 (VSGVLRFGRVD). A helical transmembrane segment spans residues 191 to 207 (VTEIQVALVIVFMLSTF). Residues 208-222 (GGATMWDYTIPILEI) are Lumenal-facing. A helical membrane pass occupies residues 223–248 (KLKIVPVLGVVGGLIFSCSNYFHVIL). Residues 249 to 265 (HGGVGKNGSTIAGTSVL) are Cytoplasmic-facing. The chain crosses the membrane as a helical span at residues 266-281 (SPGLHIGLIIILAIMI). Residues 282-293 (YKKSATNMFEKH) are Lumenal-facing. The chain crosses the membrane as a helical span at residues 294–316 (PCLYTLMFGCVFAKVAQKLVIAH). The Cytoplasmic portion of the chain corresponds to 317–329 (MTKSELYLQDTVF). The helical transmembrane segment at 330-339 (IGPGLLFLDQ) threads the bilayer. Topologically, residues 340-346 (YFNNFID) are lumenal. A helical transmembrane segment spans residues 347–376 (EYVVLWIAMVISSFDMMIYFTSLCLQISRH). Over 377–398 (LHLNIFKTSCQQAPEQVYKHID) the chain is Cytoplasmic.

It belongs to the CDP-alcohol phosphatidyltransferase class-I family. Requires Mg(2+) as cofactor. Mn(2+) serves as cofactor. Expressed in brain, heart, lung, liver, spleen, intestine and muscle. Down-regulated in kidney of type 2 diabetic KK/Ta mice.

Its subcellular location is the golgi apparatus membrane. The catalysed reaction is CDP-choline + a 1,2-diacyl-sn-glycerol = a 1,2-diacyl-sn-glycero-3-phosphocholine + CMP + H(+). It catalyses the reaction 1-octadecanoyl-2-(5Z,8Z,11Z,14Z-eicosatetraenoyl)-sn-glycerol + CDP-choline = 1-octadecanoyl-2-(5Z,8Z,11Z,14Z-eicosatetraenoyl)-sn-glycero-3-phosphocholine + CMP + H(+). It carries out the reaction 1-hexadecanoyl-2-(9Z-octadecenoyl)-sn-glycerol + CDP-choline = 1-hexadecanoyl-2-(9Z-octadecenoyl)-sn-glycero-3-phosphocholine + CMP + H(+). The enzyme catalyses 1-hexadecanoyl-2-(4Z,7Z,10Z,13Z,16Z,19Z-docosahexaenoyl)-sn-glycerol + CDP-choline = 1-hexadecanoyl-2-(4Z,7Z,10Z,13Z,16Z,19Z-docosahexaenoyl)-sn-glycero-3-phosphocholine + CMP + H(+). The catalysed reaction is 1,2-dioctanoyl-sn-glycerol + CDP-choline = 1,2-dioctanoyl-sn-glycero-3-phosphocholine + CMP + H(+). The protein operates within phospholipid metabolism; phosphatidylcholine biosynthesis; phosphatidylcholine from phosphocholine: step 2/2. Catalyzes the final step of de novo phosphatidylcholine (PC) synthesis, i.e. the transfer of choline phosphate from CDP-choline to the free hydroxyl of a diacylglycerol (DAG), producing a PC. It thereby plays a central role in the formation and maintenance of vesicular membranes. This Mus musculus (Mouse) protein is Cholinephosphotransferase 1.